The sequence spans 487 residues: b(0,+)-type amino acid transporter 1 (487 aa).

Residues 1 to 15 are compositionally biased toward basic and acidic residues; the sequence is MGDTGLRKRREDEKS. The tract at residues 1-22 is disordered; sequence MGDTGLRKRREDEKSIQSQEPK. The Cytoplasmic portion of the chain corresponds to 1 to 31; that stretch reads MGDTGLRKRREDEKSIQSQEPKTTSLQKELG. Serine 18 bears the Phosphoserine mark. Residues 32-55 form a helical membrane-spanning segment; that stretch reads LISGISIIVGTIIGSGIFVSPKSV. 43-47 provides a ligand contact to L-arginine; the sequence is IIGSG. At 56-62 the chain is on the extracellular side; it reads LSNTEAV. The helical transmembrane segment at 63-84 threads the bilayer; sequence GPCLIIWAACGVLATLGALCFA. The Cytoplasmic segment spans residues 85-110; that stretch reads ELGTMITKSGGEYPYLMEAYGPIPAY. Residues 111 to 137 traverse the membrane as a helical segment; that stretch reads LFSWASLIVIKPTSFAIICLSFSEYVC. The Extracellular portion of the chain corresponds to 138-147; that stretch reads APFYVGCKPP. Transmembrane regions (helical) follow at residues 148–169 and 170–193; these read QIVVKCLAAAAILFISTVNSLS and VRLGSYVQNIFTAAKLVIVAIIII. Over 194-217 the chain is Extracellular; that stretch reads SGLVLLAQGNTKNFDNSFEGAQLS. Residues 218–238 form a helical membrane-spanning segment; sequence VGAISLAFYNGLWAYDGWNQL. Residue aspartate 233 coordinates L-arginine. Over 239–251 the chain is Cytoplasmic; the sequence is NYITEELRNPYRN. The helical transmembrane segment at 252–274 threads the bilayer; it reads LPLAIIIGIPLVTACYILMNVSY. Over 275 to 302 the chain is Extracellular; sequence FTVMTATELLQSQAVAVTFGDRVLYPAS. Residues 303 to 325 form a helical membrane-spanning segment; the sequence is WIVPLFVAFSTIGAANGTCFTAG. The Cytoplasmic portion of the chain corresponds to 326 to 351; it reads RLIYVAGREGHMLKVLSYISVRRLTP. A run of 2 helical transmembrane segments spans residues 352-370 and 371-391; these read APAIIFYGIIATIYIIPGD and INSLVNYFSFAAWLFYGLTIL. Residues 392–410 are Cytoplasmic-facing; sequence GLIVMRFTRKELERPIKVP. A helical membrane pass occupies residues 411-431; it reads VVIPVLMTLISVFLVLAPIIS. Residues 432-434 are Extracellular-facing; sequence KPT. A helical transmembrane segment spans residues 435–450; that stretch reads WEYLYCVLFILSGLLF. Residues 451 to 487 are Cytoplasmic-facing; the sequence is YFLFVHYKFGWAQKISKPITMHLQMLMEVVPPEEDPE.

It belongs to the amino acid-polyamine-organocation (APC) superfamily. Disulfide-linked heterodimer composed of the catalytic light chain subunit SLC7A9 and the heavy chain subunit SLC3A1. The heterodimer is the minimal functional unit. Assembles in heterotetramers (dimers of heterodimers) and higher order oligomers; the oligomerization is mediated by SLC3A1 likely to prevent degradation and facilitate heteromer trafficking to the plasma membrane. Interacts with CAV1. In terms of tissue distribution, expressed in the brush border membrane in the kidney (at protein level). Kidney, small intestine, liver and placenta.

The protein localises to the apical cell membrane. It localises to the cell membrane. It carries out the reaction L-leucine(out) + L-arginine(in) = L-leucine(in) + L-arginine(out). The catalysed reaction is L-histidine(out) + L-arginine(in) = L-histidine(in) + L-arginine(out). The enzyme catalyses L-arginine(in) + L-phenylalanine(out) = L-arginine(out) + L-phenylalanine(in). It catalyses the reaction L-cysteine(out) + L-arginine(in) = L-cysteine(in) + L-arginine(out). It carries out the reaction L-cystine(out) + L-arginine(in) = L-cystine(in) + L-arginine(out). The catalysed reaction is L-lysine(out) + L-arginine(in) = L-lysine(in) + L-arginine(out). Associates with SLC3A1 to form a functional transporter complex that mediates the electrogenic exchange between cationic amino acids and neutral amino acids, with a stoichiometry of 1:1. Has system b(0,+)-like activity with high affinity for extracellular cationic amino acids and L-cystine and lower affinity for intracellular neutral amino acids. Substrate exchange is driven by high concentration of intracellular neutral amino acids and the intracellular reduction of L-cystine to L-cysteine. Required for reabsorption of L-cystine and dibasic amino acids across the brush border membrane in renal proximal tubules. The chain is b(0,+)-type amino acid transporter 1 from Homo sapiens (Human).